Here is a 92-residue protein sequence, read N- to C-terminus: Co-chaperonin GroES (92 aa).

Belongs to the GroES chaperonin family. Heptamer of 7 subunits arranged in a ring. Interacts with the chaperonin GroEL.

It localises to the cytoplasm. Its function is as follows. Together with the chaperonin GroEL, plays an essential role in assisting protein folding. The GroEL-GroES system forms a nano-cage that allows encapsulation of the non-native substrate proteins and provides a physical environment optimized to promote and accelerate protein folding. GroES binds to the apical surface of the GroEL ring, thereby capping the opening of the GroEL channel. This chain is Co-chaperonin GroES, found in Thermotoga petrophila (strain ATCC BAA-488 / DSM 13995 / JCM 10881 / RKU-1).